We begin with the raw amino-acid sequence, 598 residues long: Elongation factor 4 (598 aa).

Residues 4 to 186 (INIRNFAIIA…AIVSRLPAPS (183 aa)) enclose the tr-type G domain. GTP is bound by residues 16–21 (DHGKST) and 133–136 (NKID).

This sequence belongs to the TRAFAC class translation factor GTPase superfamily. Classic translation factor GTPase family. LepA subfamily.

The protein localises to the cell inner membrane. It carries out the reaction GTP + H2O = GDP + phosphate + H(+). Required for accurate and efficient protein synthesis under certain stress conditions. May act as a fidelity factor of the translation reaction, by catalyzing a one-codon backward translocation of tRNAs on improperly translocated ribosomes. Back-translocation proceeds from a post-translocation (POST) complex to a pre-translocation (PRE) complex, thus giving elongation factor G a second chance to translocate the tRNAs correctly. Binds to ribosomes in a GTP-dependent manner. In Ehrlichia ruminantium (strain Gardel), this protein is Elongation factor 4.